Consider the following 267-residue polypeptide: Stomatin-3 (267 aa).

A helical membrane pass occupies residues 17 to 37 (FVALICAWAFLLLTFPVSIFF).

Belongs to the band 7/mec-2 family.

Its subcellular location is the membrane. This is Stomatin-3 (sto-3) from Caenorhabditis elegans.